The chain runs to 466 residues: Argininosuccinate lyase (466 aa).

This sequence belongs to the lyase 1 family. Argininosuccinate lyase subfamily.

The protein localises to the cytoplasm. It carries out the reaction 2-(N(omega)-L-arginino)succinate = fumarate + L-arginine. Its pathway is amino-acid biosynthesis; L-arginine biosynthesis; L-arginine from L-ornithine and carbamoyl phosphate: step 3/3. In Campylobacter concisus (strain 13826), this protein is Argininosuccinate lyase.